A 237-amino-acid chain; its full sequence is Bax inhibitor 1 (237 aa).

The Cytoplasmic segment spans residues methionine 1–lysine 29. Lysine 7 participates in a covalent cross-link: Glycyl lysine isopeptide (Lys-Gly) (interchain with G-Cter in ubiquitin). A helical membrane pass occupies residues valine 30 to valine 50. The Lumenal segment spans residues threonine 51–arginine 52. Residues phenylalanine 53–alanine 73 traverse the membrane as a helical segment. Residues threonine 74–glycine 86 are Cytoplasmic-facing. A helical transmembrane segment spans residues leucine 87–isoleucine 107. Topologically, residues alanine 108 to serine 112 are lumenal. The chain crosses the membrane as a helical span at residues isoleucine 113–leucine 133. At tyrosine 134–serine 139 the chain is on the cytoplasmic side. Residues tyrosine 140–glycine 160 traverse the membrane as a helical segment. Residues asparagine 161–serine 166 lie on the Lumenal side of the membrane. Residues isoleucine 167 to phenylalanine 187 form a helical membrane-spanning segment. At aspartate 188 to histidine 206 the chain is on the cytoplasmic side. Positions cysteine 207–methionine 227 form an intramembrane region, helical. Topologically, residues asparagine 228 to lysine 237 are cytoplasmic.

This sequence belongs to the BI1 family. In terms of assembly, interacts with BCL2 and BCL2L1. Interacts with ERN1. Ubiquitinated by BFAR, leading to proteasomal degradation.

It is found in the endoplasmic reticulum membrane. Functionally, endoplasmic reticulum (ER)-resident protein that confers cellular protection as an anti-apoptotic protein by limiting multiple stress-inducing pathways surrounding the endoplasmic reticulum and mitochondria. Inhibits the activities of the key sensor for the endoplasmic reticulum unfolded protein response IRE1alpha/ERN1 both directly and by blocking BAX/BAK binding. Modulates ER calcium homeostasis by acting as a calcium-leak channel. Negatively regulates autophagy and autophagosome formation, especially during periods of nutrient deprivation, and reduces cell survival during starvation. This chain is Bax inhibitor 1 (TMBIM6), found in Sus scrofa (Pig).